Here is a 345-residue protein sequence, read N- to C-terminus: Protein RecA (345 aa).

Residue 65–72 participates in ATP binding; the sequence is GPESSGKT.

It belongs to the RecA family.

The protein localises to the cytoplasm. In terms of biological role, can catalyze the hydrolysis of ATP in the presence of single-stranded DNA, the ATP-dependent uptake of single-stranded DNA by duplex DNA, and the ATP-dependent hybridization of homologous single-stranded DNAs. It interacts with LexA causing its activation and leading to its autocatalytic cleavage. This is Protein RecA from Campylobacter fetus subsp. fetus (strain 82-40).